We begin with the raw amino-acid sequence, 312 residues long: uncharacterized protein (312 aa).

It belongs to the asfivirus CP312R family.

The protein resides in the virion. This is an uncharacterized protein from African swine fever virus (isolate Tick/South Africa/Pretoriuskop Pr4/1996) (ASFV).